The chain runs to 518 residues: ATP synthase subunit alpha (518 aa).

170-177 (GDRQTGKT) serves as a coordination point for ATP.

Belongs to the ATPase alpha/beta chains family. In terms of assembly, F-type ATPases have 2 components, CF(1) - the catalytic core - and CF(0) - the membrane proton channel. CF(1) has five subunits: alpha(3), beta(3), gamma(1), delta(1), epsilon(1). CF(0) has three main subunits: a(1), b(2) and c(9-12). The alpha and beta chains form an alternating ring which encloses part of the gamma chain. CF(1) is attached to CF(0) by a central stalk formed by the gamma and epsilon chains, while a peripheral stalk is formed by the delta and b chains.

It is found in the cell membrane. It catalyses the reaction ATP + H2O + 4 H(+)(in) = ADP + phosphate + 5 H(+)(out). In terms of biological role, produces ATP from ADP in the presence of a proton gradient across the membrane. The alpha chain is a regulatory subunit. The sequence is that of ATP synthase subunit alpha from Mycoplasmoides gallisepticum (strain R(low / passage 15 / clone 2)) (Mycoplasma gallisepticum).